Reading from the N-terminus, the 218-residue chain is MAAPRISFSPSDILFGVLDRLFKDNATGKVLASRVAVVILLFMMAIVWYRGDSFFEYYKQSKYETYSEIIEKERNARFESVALEQLQIVHISSEADFSAVYSFRPKNLNYFVDIIAYEGKLPSTISEKSLGGYPVDKTMDEYTVHLNGRHYYSNSKFAFLPTKKPTPEINYMYSCPYFNLDNIYAGTITMYWYRNDHISNDRLESICSQAARILGRAK.

The Cytoplasmic portion of the chain corresponds to 1–34 (MAAPRISFSPSDILFGVLDRLFKDNATGKVLASR). The helical; Signal-anchor for type II membrane protein transmembrane segment at 35–49 (VAVVILLFMMAIVWY) threads the bilayer. Residues 50–218 (RGDSFFEYYK…QAARILGRAK (169 aa)) lie on the Periplasmic side of the membrane. Cys-175 and Cys-207 are disulfide-bonded.

It belongs to the T4likevirus holin family. In terms of assembly, homomultimer. Heterotetramer composed of 2 holin and 2 antiholin. The holin-antiholin complex binds dsDNA. Interacts (via C-terminus) with antiholin (via C-terminus); this interaction blocks the holin homomultimerization and delays host cell lysis. Interacts (via N-terminus) with the lysis inhibition accessory protein rIII; this interaction stabilizes the holin-antiholin complex thereby resulting in a robust block of the hole formation. Disulfide bond is required for functionality.

It localises to the host cell inner membrane. Its function is as follows. Accumulates harmlessly in the cytoplasmic membrane until it reaches a critical concentration that triggers the formation of micron-scale pores (holes) causing host cell membrane disruption and endolysin escape into the periplasmic space. Determines the precise timing of host cell lysis. Regulated by specific antiholins that somehow sense superinfections and then delay lysis. Participates with the endolysin and spanin proteins in the sequential events which lead to the programmed host cell lysis releasing the mature viral particles from the host cell. This is Holin (T) from Enterobacteria phage K3 (Bacteriophage K3).